The primary structure comprises 148 residues: uncharacterized protein (148 aa).

Residues 1 to 11 (MKPRNINNSLP) show a composition bias toward polar residues. Residues 1 to 31 (MKPRNINNSLPLQPLVPDQENKNKKNEEKSV) are disordered. Residues 19–30 (QENKNKKNEEKS) show a composition bias toward basic and acidic residues.

This is an uncharacterized protein from Escherichia coli (strain K12).